Consider the following 89-residue polypeptide: Small ribosomal subunit protein uS17 (89 aa).

This sequence belongs to the universal ribosomal protein uS17 family. As to quaternary structure, part of the 30S ribosomal subunit.

In terms of biological role, one of the primary rRNA binding proteins, it binds specifically to the 5'-end of 16S ribosomal RNA. The sequence is that of Small ribosomal subunit protein uS17 from Acidovorax ebreus (strain TPSY) (Diaphorobacter sp. (strain TPSY)).